Here is a 367-residue protein sequence, read N- to C-terminus: Protein-glutamate methylesterase/protein-glutamine glutaminase 1 (367 aa).

The 118-residue stretch at 9–126 (KVLCVDDSAL…RDGMLDYSEK (118 aa)) folds into the Response regulatory domain. D60 is modified (4-aspartylphosphate). The region spanning 168 to 360 (LVSTEKLIIV…RRIMARLASM (193 aa)) is the CheB-type methylesterase domain. Active-site residues include S180, H206, and D302.

It belongs to the CheB family. Post-translationally, phosphorylated by CheA. Phosphorylation of the N-terminal regulatory domain activates the methylesterase activity.

Its subcellular location is the cytoplasm. It catalyses the reaction [protein]-L-glutamate 5-O-methyl ester + H2O = L-glutamyl-[protein] + methanol + H(+). The enzyme catalyses L-glutaminyl-[protein] + H2O = L-glutamyl-[protein] + NH4(+). In terms of biological role, involved in chemotaxis. Part of a chemotaxis signal transduction system that modulates chemotaxis in response to various stimuli. Catalyzes the demethylation of specific methylglutamate residues introduced into the chemoreceptors (methyl-accepting chemotaxis proteins or MCP) by CheR. Also mediates the irreversible deamidation of specific glutamine residues to glutamic acid. The protein is Protein-glutamate methylesterase/protein-glutamine glutaminase 1 of Burkholderia pseudomallei (strain K96243).